A 136-amino-acid chain; its full sequence is Large ribosomal subunit protein uL16 (136 aa).

This sequence belongs to the universal ribosomal protein uL16 family. Part of the 50S ribosomal subunit.

Its function is as follows. Binds 23S rRNA and is also seen to make contacts with the A and possibly P site tRNAs. The sequence is that of Large ribosomal subunit protein uL16 from Mesomycoplasma hyopneumoniae (strain 232) (Mycoplasma hyopneumoniae).